The following is a 346-amino-acid chain: Protein RecA (346 aa).

Gly79 to Thr86 contributes to the ATP binding site.

This sequence belongs to the RecA family.

It localises to the cytoplasm. Its function is as follows. Can catalyze the hydrolysis of ATP in the presence of single-stranded DNA, the ATP-dependent uptake of single-stranded DNA by duplex DNA, and the ATP-dependent hybridization of homologous single-stranded DNAs. It interacts with LexA causing its activation and leading to its autocatalytic cleavage. The protein is Protein RecA of Chlorobaculum tepidum (strain ATCC 49652 / DSM 12025 / NBRC 103806 / TLS) (Chlorobium tepidum).